The sequence spans 662 residues: NADH-ubiquinone oxidoreductase chain 5 (662 aa).

The next 16 helical transmembrane spans lie at 40 to 62, 77 to 99, 112 to 129, 133 to 155, 168 to 190, 200 to 222, 243 to 262, 272 to 294, 301 to 320, 325 to 347, 360 to 382, 408 to 430, 450 to 472, 510 to 529, 609 to 631, and 636 to 658; these read AALS…IVIG, LFDS…VHLY, RFFS…VLVA, YFIM…NFWY, LTVN…WVFG, VAPY…GAMA, VSAL…LMLR, TVLV…TGLL, VIAY…VGLS, ALFH…GAVI, GGLV…SLMA, TIAY…RLVS, APMI…GYIA, LLPA…LYHV, GVIT…LVFA, and VFNE…LPSS.

It belongs to the complex I subunit 5 family.

The protein resides in the mitochondrion inner membrane. It carries out the reaction a ubiquinone + NADH + 5 H(+)(in) = a ubiquinol + NAD(+) + 4 H(+)(out). In terms of biological role, core subunit of the mitochondrial membrane respiratory chain NADH dehydrogenase (Complex I) that is believed to belong to the minimal assembly required for catalysis. Complex I functions in the transfer of electrons from NADH to the respiratory chain. The immediate electron acceptor for the enzyme is believed to be ubiquinone. The sequence is that of NADH-ubiquinone oxidoreductase chain 5 (ND5) from Cryptococcus neoformans var. grubii serotype A (strain H99 / ATCC 208821 / CBS 10515 / FGSC 9487) (Filobasidiella neoformans var. grubii).